The following is a 192-amino-acid chain: Ribose 1,5-bisphosphate phosphokinase PhnN (192 aa).

Residue 15-22 coordinates ATP; that stretch reads GPSGAGKD.

It belongs to the ribose 1,5-bisphosphokinase family.

It catalyses the reaction alpha-D-ribose 1,5-bisphosphate + ATP = 5-phospho-alpha-D-ribose 1-diphosphate + ADP. The protein operates within metabolic intermediate biosynthesis; 5-phospho-alpha-D-ribose 1-diphosphate biosynthesis; 5-phospho-alpha-D-ribose 1-diphosphate from D-ribose 5-phosphate (route II): step 3/3. In terms of biological role, catalyzes the phosphorylation of ribose 1,5-bisphosphate to 5-phospho-D-ribosyl alpha-1-diphosphate (PRPP). This Brucella melitensis biotype 2 (strain ATCC 23457) protein is Ribose 1,5-bisphosphate phosphokinase PhnN.